Here is a 147-residue protein sequence, read N- to C-terminus: Transthyretin (147 aa).

A signal peptide spans 1–20; sequence MASHRLLLLCLAGLVFVSEA. A Sulfocysteine modification is found at C30. K35 contacts L-thyroxine. S72 is subject to Phosphoserine. Residue E74 participates in L-thyroxine binding. An N-linked (GlcNAc...) asparagine glycan is attached at N118. S137 contributes to the L-thyroxine binding site.

The protein belongs to the transthyretin family. Homotetramer. Dimer of dimers. In the homotetramer, subunits assemble around a central channel that can accommodate two ligand molecules. Interacts with RBP4. Sulfonation of the reactive cysteine Cys-30 enhances the stability of the native conformation of TTR, avoiding misassembly of the protein leading to amyloid formation.

Its subcellular location is the secreted. Functionally, thyroid hormone-binding protein. Probably transports thyroxine from the bloodstream to the brain. The polypeptide is Transthyretin (TTR) (Macaca fascicularis (Crab-eating macaque)).